Here is a 200-residue protein sequence, read N- to C-terminus: Small ribosomal subunit protein mS38 (200 aa).

This sequence belongs to the mitochondrion-specific ribosomal protein mS38 family. Component of the mitochondrial ribosome small subunit (28S) which comprises a 12S rRNA and about 30 distinct proteins. Interacts with Aurora-A. As to expression, ubiquitously expressed and especially highly expressed in heart, skeletal muscle and testis.

It is found in the mitochondrion matrix. The protein resides in the nucleus. Its function is as follows. May act as a negative regulator of Aurora-A kinase, by down-regulation through proteasome-dependent degradation. This Mus musculus (Mouse) protein is Small ribosomal subunit protein mS38 (Aurkaip1).